A 511-amino-acid polypeptide reads, in one-letter code: Histidine ammonia-lyase (511 aa).

Positions 142–144 form a cross-link, 5-imidazolinone (Ala-Gly); it reads ASG. At Ser-143 the chain carries 2,3-didehydroalanine (Ser).

The protein belongs to the PAL/histidase family. Contains an active site 4-methylidene-imidazol-5-one (MIO), which is formed autocatalytically by cyclization and dehydration of residues Ala-Ser-Gly.

The protein resides in the cytoplasm. The enzyme catalyses L-histidine = trans-urocanate + NH4(+). It functions in the pathway amino-acid degradation; L-histidine degradation into L-glutamate; N-formimidoyl-L-glutamate from L-histidine: step 1/3. The polypeptide is Histidine ammonia-lyase (Brucella suis biovar 1 (strain 1330)).